A 156-amino-acid chain; its full sequence is uncharacterized protein (156 aa).

The signal sequence occupies residues 1–27 (MKLLVLRLILIISTIFVLLNLSCMVNG). 5 N-linked (GlcNAc...) asparagine glycosylation sites follow: asparagine 20, asparagine 83, asparagine 103, asparagine 106, and asparagine 134.

It is found in the secreted. This is an uncharacterized protein from Dictyostelium discoideum (Social amoeba).